A 486-amino-acid chain; its full sequence is Membrane-bound lytic murein transglycosylase F (486 aa).

An N-terminal signal peptide occupies residues 1 to 26 (MFSPMALRPRCAKWLIVTGLFLMLGA). Residues 27–267 (CVEKPSTLER…RLKDRYYGHV (241 aa)) form a non-LT domain region. Residues 268-486 (DVLGYVGAYT…TKPPEENPPL (219 aa)) are LT domain. E314 is an active-site residue. The disordered stretch occupies residues 464–486 (VAEGNLHVPGVNKTKPPEENPPL).

The protein in the N-terminal section; belongs to the bacterial solute-binding protein 3 family. It in the C-terminal section; belongs to the transglycosylase Slt family.

Its subcellular location is the cell outer membrane. It carries out the reaction Exolytic cleavage of the (1-&gt;4)-beta-glycosidic linkage between N-acetylmuramic acid (MurNAc) and N-acetylglucosamine (GlcNAc) residues in peptidoglycan, from either the reducing or the non-reducing ends of the peptidoglycan chains, with concomitant formation of a 1,6-anhydrobond in the MurNAc residue.. Its function is as follows. Murein-degrading enzyme that degrades murein glycan strands and insoluble, high-molecular weight murein sacculi, with the concomitant formation of a 1,6-anhydromuramoyl product. Lytic transglycosylases (LTs) play an integral role in the metabolism of the peptidoglycan (PG) sacculus. Their lytic action creates space within the PG sacculus to allow for its expansion as well as for the insertion of various structures such as secretion systems and flagella. This is Membrane-bound lytic murein transglycosylase F from Pseudomonas fluorescens (strain ATCC BAA-477 / NRRL B-23932 / Pf-5).